The sequence spans 202 residues: Histone chaperone ASF1B (202 aa).

An interaction with CHAF1B region spans residues 1–155; the sequence is MAKVSVLNVA…VTRFHINWDN (155 aa). An interaction with histone H3 region spans residues 1–156; sequence MAKVSVLNVA…TRFHINWDNN (156 aa). S198 carries the phosphoserine; by TLK2 modification.

Belongs to the ASF1 family. As to quaternary structure, interacts with histone H3 (via C-terminus), including histone H3.1, H3.2 and H3.3, and histone H4; the interaction with H3 is direct. Interacts with the CHAF1A, CHAF1B and RBBP4 subunits of the CAF-1 complex. Interacts with HAT1, NASP and TAF1. Found in a soluble complex with NASP and histones H3 and H4; the interaction with NASP is probably indirect and mediated by H3-H4. Interacts with CDAN1. Found in a cytosolic complex with IPO4 and histones H3 and H4. Interacts with CREBBP. In terms of processing, phosphorylated by TLK1 and TLK2. Highly expressed in testis and at lower levels in colon, small intestine and thymus.

It localises to the nucleus. Its subcellular location is the cytoplasm. The protein resides in the cytosol. In terms of biological role, histone chaperone that facilitates histone deposition and histone exchange and removal during nucleosome assembly and disassembly. Cooperates with chromatin assembly factor 1 (CAF-1) to promote replication-dependent chromatin assembly. Also involved in the nuclear import of the histone H3-H4 dimer together with importin-4 (IPO4): specifically recognizes and binds newly synthesized histones with the monomethylation of H3 'Lys-9' (H3K9me1) and diacetylation at 'Lys-5' and 'Lys-12' of H4 (H4K5K12ac) marks in the cytosol. Does not participate in replication-independent nucleosome deposition which is mediated by ASF1A and HIRA. Required for gonad development. This chain is Histone chaperone ASF1B, found in Homo sapiens (Human).